Here is a 319-residue protein sequence, read N- to C-terminus: Cell surface A33 antigen (319 aa).

Residues 1 to 21 (MVGKMWPVLWTLCAVRVTVDA) form the signal peptide. Residues 22 to 134 (ISVETPQDVL…LEGNTKSRVR (113 aa)) form the Ig-like V-type domain. At 22–235 (ISVETPQDVL…VAVRSPSMNV (214 aa)) the chain is on the extracellular side. 3 cysteine pairs are disulfide-bonded: C43-C117, C146-C222, and C162-C211. Residues N112, N200, and N223 are each glycosylated (N-linked (GlcNAc...) asparagine). One can recognise an Ig-like C2-type domain in the interval 140 to 227 (PPSKPECGIE…GTQFCNITVA (88 aa)). A helical membrane pass occupies residues 236–256 (ALYVGIAVGVVAALIIIGIII). At 257-319 (YCCCCRGKDD…GRESPDHLDQ (63 aa)) the chain is on the cytoplasmic side. Basic and acidic residues-rich tracts occupy residues 267 to 295 (NTED…SRER) and 303 to 319 (QEEQ…HLDQ). The interval 267–319 (NTEDKEDARPNREAYEEPPEQLRELSREREEEDDYRQEEQRSTGRESPDHLDQ) is disordered.

In terms of processing, N-glycosylated, contains approximately 8 kDa of N-linked carbohydrate. Post-translationally, palmitoylated. In terms of tissue distribution, expressed in normal gastrointestinal epithelium and in 95% of colon cancers.

Its subcellular location is the membrane. Functionally, may play a role in cell-cell recognition and signaling. The chain is Cell surface A33 antigen (GPA33) from Homo sapiens (Human).